A 349-amino-acid polypeptide reads, in one-letter code: E3 ubiquitin-protein ligase rnf146 (349 aa).

The disordered stretch occupies residues M1–S21. Low complexity predominate over residues S10 to S21. The segment at C41–R79 adopts an RING-type zinc-finger fold. One can recognise a WWE domain in the interval E97–R173. A glycoprotein-binding residues include Y113, R116, W120, Y150, Q159, R169, and K181. 2 disordered regions span residues T226–L251 and D264–V349. Over residues S283–A292 the composition is skewed to polar residues. Positions W298–A307 are enriched in acidic residues. Positions V308–L317 are enriched in basic and acidic residues.

It is found in the cytoplasm. It localises to the cytosol. The protein resides in the nucleus. The enzyme catalyses S-ubiquitinyl-[E2 ubiquitin-conjugating enzyme]-L-cysteine + [acceptor protein]-L-lysine = [E2 ubiquitin-conjugating enzyme]-L-cysteine + N(6)-ubiquitinyl-[acceptor protein]-L-lysine.. It participates in protein modification; protein ubiquitination. E3 ubiquitin-protein ligase that specifically binds poly-ADP-ribosylated proteins and mediates their ubiquitination and subsequent degradation. May regulate many important biological processes, such as cell survival and DNA damage response. Acts as an activator of the Wnt signaling pathway by mediating the ubiquitination of poly-ADP-ribosylated proteins. Neuroprotective protein. Protects against cell death induced by DNA damaging agents and rescues cells from G1 arrest. Promotes cell survival after gamma-irradiation. Facilitates DNA repair. The polypeptide is E3 ubiquitin-protein ligase rnf146 (rnf146) (Salmo salar (Atlantic salmon)).